The primary structure comprises 251 residues: Leucine-rich repeat and calponin homology domain-containing protein 1 (251 aa).

Residues 73–97 form a disordered region; it reads SNGSEYSPNEIRANSPAISPTANST. Ser-87 and Ser-91 each carry phosphoserine. Over residues 88-97 the composition is skewed to polar residues; sequence PAISPTANST. Thr-123 is subject to Phosphothreonine. Positions 131 to 244 constitute a Calponin-homology (CH) domain; the sequence is MREEKELVEH…ITVQALLDVT (114 aa).

Interacts (via LRR repeats) with unphosphorylated DOCK8 (via DHR-2 domain); the interaction prevents the interaction between DOCK8 and CDC42.

Its subcellular location is the cytoplasm. Its function is as follows. Acts as a negative regulator of GTPase CDC42 by sequestering CDC42-guanine exchange factor DOCK8. Probably by preventing CDC42 activation, negatively regulates CD4(+) T-cell migration. The chain is Leucine-rich repeat and calponin homology domain-containing protein 1 from Felis catus (Cat).